Reading from the N-terminus, the 217-residue chain is MMSLGLVGRKVGMTRIFTAEGDSIPVTVLDVSDNRVTQIKTVETDGYTAVQVAFGSRRASRVTKPLAGHLAKAGVEAGEILKEFRIDAAKAAELSNGAVVGADLFEVGQKVDVQGVSIGKGYAGTIKRYNFSSGRATHGNSRSHNVPGSIGMAQDPGRVFPGKRMTGHLGDVTVTVQNLEIARIDAERKLLLVKGAIPGAKGGKVFVTPAVKTKGAK.

Residue Q154 is modified to N5-methylglutamine.

The protein belongs to the universal ribosomal protein uL3 family. Part of the 50S ribosomal subunit. Forms a cluster with proteins L14 and L19. Methylated by PrmB.

One of the primary rRNA binding proteins, it binds directly near the 3'-end of the 23S rRNA, where it nucleates assembly of the 50S subunit. The protein is Large ribosomal subunit protein uL3 of Burkholderia ambifaria (strain ATCC BAA-244 / DSM 16087 / CCUG 44356 / LMG 19182 / AMMD) (Burkholderia cepacia (strain AMMD)).